The sequence spans 50 residues: Basic phospholipase A2 Bmaj-9 (50 aa).

Tyr27, Gly29, and Gly31 together coordinate Ca(2+). Cys28 and Cys45 form a disulfide bridge. The active site involves His48. Asp49 is a binding site for Ca(2+).

Belongs to the phospholipase A2 family. Group II subfamily. D49 sub-subfamily. Requires Ca(2+) as cofactor. In terms of tissue distribution, expressed by the venom gland.

It is found in the secreted. It catalyses the reaction a 1,2-diacyl-sn-glycero-3-phosphocholine + H2O = a 1-acyl-sn-glycero-3-phosphocholine + a fatty acid + H(+). Its function is as follows. Snake venom phospholipase A2 (PLA2) that causes irreversible neuromuscular blockade in chick biventer cervicis muscle preparations. The neuromuscular blockade is mediated by inhibitory action at the presynaptic motor nerve endings. PLA2 catalyzes the calcium-dependent hydrolysis of the 2-acyl groups in 3-sn-phosphoglycerides. This is Basic phospholipase A2 Bmaj-9 from Bothrops marajoensis (Marajo lancehead).